An 82-amino-acid polypeptide reads, in one-letter code: MNDITAAASVIAAALAVGLAAIGPGIGQGNAASKAAEGIARQPEAEGKIRGTLLLSLAFMESLTIYGLLVSIVLLFANPFRG.

2 helical membrane-spanning segments follow: residues 6-26 and 57-77; these read AAASVIAAALAVGLAAIGPGI and LAFMESLTIYGLLVSIVLLFA.

The protein belongs to the ATPase C chain family. In terms of assembly, F-type ATPases have 2 components, F(1) - the catalytic core - and F(0) - the membrane proton channel. F(1) has five subunits: alpha(3), beta(3), gamma(1), delta(1), epsilon(1). F(0) has four main subunits: a(1), b(1), b'(1) and c(10-14). The alpha and beta chains form an alternating ring which encloses part of the gamma chain. F(1) is attached to F(0) by a central stalk formed by the gamma and epsilon chains, while a peripheral stalk is formed by the delta, b and b' chains.

Its subcellular location is the cell inner membrane. In terms of biological role, f(1)F(0) ATP synthase produces ATP from ADP in the presence of a proton or sodium gradient. F-type ATPases consist of two structural domains, F(1) containing the extramembraneous catalytic core and F(0) containing the membrane proton channel, linked together by a central stalk and a peripheral stalk. During catalysis, ATP synthesis in the catalytic domain of F(1) is coupled via a rotary mechanism of the central stalk subunits to proton translocation. Functionally, key component of the F(0) channel; it plays a direct role in translocation across the membrane. A homomeric c-ring of between 10-14 subunits forms the central stalk rotor element with the F(1) delta and epsilon subunits. The protein is ATP synthase subunit c of Gloeobacter violaceus (strain ATCC 29082 / PCC 7421).